The following is a 20-amino-acid chain: Dentinal fluid transport-stimulating peptide (20 aa).

The segment at 1–20 (GVIAWELQHNEPGRKDSTAG) is disordered. Residues 8–20 (QHNEPGRKDSTAG) are compositionally biased toward basic and acidic residues.

Its function is as follows. This peptide stimulates the transport of dentinal fluid, which is important for the prevention of dental caries. The chain is Dentinal fluid transport-stimulating peptide from Rattus norvegicus (Rat).